The chain runs to 2304 residues: Protein Ycf2 (2304 aa).

1637–1644 provides a ligand contact to ATP; it reads GSIGTGRS.

This sequence belongs to the Ycf2 family.

Its subcellular location is the plastid. The protein resides in the chloroplast stroma. Its function is as follows. Probable ATPase of unknown function. Its presence in a non-photosynthetic plant (Epifagus virginiana) and experiments in tobacco indicate that it has an essential function which is probably not related to photosynthesis. This is Protein Ycf2 from Amborella trichopoda.